Consider the following 449-residue polypeptide: BPI fold-containing family B member 6 (449 aa).

The signal sequence occupies residues 1–18 (MLCSLSLVLCGLLAGTRA). N-linked (GlcNAc...) asparagine glycosylation is present at asparagine 115. Cysteine 138 and cysteine 172 form a disulfide bridge.

It belongs to the BPI/LBP/Plunc superfamily. BPI/LBP family.

It is found in the secreted. This Mus musculus (Mouse) protein is BPI fold-containing family B member 6 (Bpifb6).